Reading from the N-terminus, the 224-residue chain is MLIHEISENEKPREKLQNYGIEALSSSELVALIIETGTKNESVLTIANRIIMKFKNVGEMQYASIEEFQLVNGIGIAKASKIMAAIELGRRIGIVTEQEEVVVRCPEDAVKLVMPELAFLFQEHFHCLFLNTKNQVIYRQTIFVGGLNASIVHPREVFRLALRKSAASIMCFHNHPSGDPTPSSEDLLVTKRLAEAGNIVGITLLDHIIIGKNKYISLKEKGYF.

The MPN domain maps to 102–224 (VVRCPEDAVK…YISLKEKGYF (123 aa)). The Zn(2+) site is built by histidine 173, histidine 175, and aspartate 186. The short motif at 173–186 (HNHPSGDPTPSSED) is the JAMM motif element.

It belongs to the UPF0758 family.

The chain is UPF0758 protein Lm4b_01560 from Listeria monocytogenes serotype 4b (strain CLIP80459).